The following is a 105-amino-acid chain: Large ribosomal subunit protein uL24 (105 aa).

Belongs to the universal ribosomal protein uL24 family. Part of the 50S ribosomal subunit.

In terms of biological role, one of two assembly initiator proteins, it binds directly to the 5'-end of the 23S rRNA, where it nucleates assembly of the 50S subunit. Functionally, one of the proteins that surrounds the polypeptide exit tunnel on the outside of the subunit. In Methylocella silvestris (strain DSM 15510 / CIP 108128 / LMG 27833 / NCIMB 13906 / BL2), this protein is Large ribosomal subunit protein uL24.